The following is an 86-amino-acid chain: Cell division topological specificity factor (86 aa).

Belongs to the MinE family.

Functionally, prevents the cell division inhibition by proteins MinC and MinD at internal division sites while permitting inhibition at polar sites. This ensures cell division at the proper site by restricting the formation of a division septum at the midpoint of the long axis of the cell. In Shewanella halifaxensis (strain HAW-EB4), this protein is Cell division topological specificity factor.